Reading from the N-terminus, the 190-residue chain is Translation initiation factor IF-3 (190 aa).

This sequence belongs to the IF-3 family. As to quaternary structure, monomer.

It is found in the cytoplasm. Its function is as follows. IF-3 binds to the 30S ribosomal subunit and shifts the equilibrium between 70S ribosomes and their 50S and 30S subunits in favor of the free subunits, thus enhancing the availability of 30S subunits on which protein synthesis initiation begins. The protein is Translation initiation factor IF-3 of Prochlorococcus marinus (strain AS9601).